The sequence spans 428 residues: AP-1 complex subunit mu-2 (428 aa).

Residues 170–426 form the MHD domain; it reads KNEVFLDVIE…ITMAGEYELR (257 aa).

The protein belongs to the adaptor complexes medium subunit family. In terms of assembly, adaptor protein complex 1 (AP-1) is a heterotetramer composed of two large adaptins (gamma-type subunit and beta-type subunit), a medium adaptin (mu-type subunit) and a small adaptin (sigma-type subunit). In terms of tissue distribution, ubiquitous.

The protein resides in the golgi apparatus. It localises to the trans-Golgi network membrane. The protein localises to the early endosome membrane. Its subcellular location is the cytoplasmic vesicle. It is found in the clathrin-coated vesicle membrane. In terms of biological role, subunit of clathrin-associated adaptor protein complex 1 that plays a role in protein sorting at the trans-Golgi network and early endosomes (TGN/EE). The AP complexes mediate the recruitment of clathrin to membranes and the recognition of sorting signals within the cytosolic tails of transmembrane cargo molecules. Required for KNOLLE localization at the cell plate to mediate cytokinesis. Functions redundantly with AP1M1 in multiple post-Golgi trafficking pathways leading from the TGN to the vacuole, the plasma membrane, and the cell-division plane. This chain is AP-1 complex subunit mu-2 (AP1M2), found in Arabidopsis thaliana (Mouse-ear cress).